Consider the following 734-residue polypeptide: Photosystem I P700 chlorophyll a apoprotein A2 (734 aa).

8 helical membrane passes run 46–69 (IFAS…FHVA), 135–158 (LYTG…LHLQ), 175–199 (LNHH…HVAI), 273–291 (IAHH…GHMY), 330–353 (IHFQ…QHMY), 369–395 (AALY…IFFI), 417–439 (AIKS…LYVH), and 517–535 (FLVH…LILV). [4Fe-4S] cluster contacts are provided by C559 and C568. Transmembrane regions (helical) follow at residues 575-596 (AFYL…YWHW) and 643-665 (LSVW…MFLI). Chlorophyll a-binding residues include H654, M662, and Y670. W671 provides a ligand contact to phylloquinone. The chain crosses the membrane as a helical span at residues 707–727 (LVGLAHFSVGYIFTYAAFLIA).

This sequence belongs to the PsaA/PsaB family. In terms of assembly, the PsaA/B heterodimer binds the P700 chlorophyll special pair and subsequent electron acceptors. PSI consists of a core antenna complex that captures photons, and an electron transfer chain that converts photonic excitation into a charge separation. The eukaryotic PSI reaction center is composed of at least 11 subunits. P700 is a chlorophyll a/chlorophyll a' dimer, A0 is one or more chlorophyll a, A1 is one or both phylloquinones and FX is a shared 4Fe-4S iron-sulfur center. serves as cofactor.

The protein localises to the plastid. It is found in the chloroplast thylakoid membrane. It catalyses the reaction reduced [plastocyanin] + hnu + oxidized [2Fe-2S]-[ferredoxin] = oxidized [plastocyanin] + reduced [2Fe-2S]-[ferredoxin]. PsaA and PsaB bind P700, the primary electron donor of photosystem I (PSI), as well as the electron acceptors A0, A1 and FX. PSI is a plastocyanin-ferredoxin oxidoreductase, converting photonic excitation into a charge separation, which transfers an electron from the donor P700 chlorophyll pair to the spectroscopically characterized acceptors A0, A1, FX, FA and FB in turn. Oxidized P700 is reduced on the lumenal side of the thylakoid membrane by plastocyanin. The chain is Photosystem I P700 chlorophyll a apoprotein A2 from Amborella trichopoda.